Here is a 586-residue protein sequence, read N- to C-terminus: ATPase family AAA domain-containing protein 3A (586 aa).

2 disordered regions span residues 1-55 (MSWL…PTGL) and 111-134 (QAEE…QYQD). Residue Ser2 is modified to N-acetylserine. Positions 2–50 (SWLFGINKGPKGEGAGPPPPLPPAQPGAEGGGDRGLGDRPAPKDKWSNF) are required for interaction with the inner surface of the mitochondrial outer membrane. The Mitochondrial intermembrane segment spans residues 2-246 (SWLFGINKGP…FRAFVTDWDK (245 aa)). Residues 17 to 26 (GPPPPLPPAQ) are compositionally biased toward pro residues. Basic and acidic residues-rich tracts occupy residues 32–48 (GGDR…DKWS) and 111–125 (QAEE…ETRQ). The stretch at 86 to 219 (QLEQQSKLKE…QIRLKAAEHR (134 aa)) forms a coiled coil. A helical transmembrane segment spans residues 247–264 (VTATVAGLTLLAVGVYSA). Topologically, residues 265-586 (KNATLVAGRF…PGRGDEPSPS (322 aa)) are mitochondrial matrix. The S100B-binding stretch occupies residues 290–305 (RITVLEALRHPIQVSR). Ser321 carries the post-translational modification Phosphoserine. 352–359 (GPPGTGKT) is a binding site for ATP. N6-acetyllysine is present on Lys491.

The protein belongs to the AAA ATPase family. In terms of assembly, can form homooligomers. Homodimer formation at the N-terminus may be regulated by ATP and is required for the interaction with the inner surface of the mitochondrial outer membrane and correct mitochondrial homeostasis. Interacts with components of the mitochondrial ribosome and with other proteins involved in mitochondrial RNA metabolism. May also interact with protein involved in lipid metabolism, including STARD9. May interact with FAM210A. Interacts with GADD45GIP1. Interacts with S100B in a Ca(+2)- and Zn(+2)-dependent manner; this interaction probably occurs in the cytosol prior to mitochondrial targeting. S100B could assist ATAD3A cytoplasmic processing, preventing aggregation and favoring mitochondrial localization. Interacts with HSP60/HSPD1. Forms heterooligomers with ATAD3B; this interaction may affect ATAD3A activity. Interacts with CLPB. Interacts with EIF2AK3/PERK; ATAD3A and EIF2S1/eIF-2-alpha occupy a common binding site within the cytoplasmic loop of EIF2AK3/PERK, leading to prevent EIF2AK3/PERK association with its substrate EIF2S1/eIF-2-alpha. As to expression, overexpressed in lung adenocarcinomas (at protein level).

Its subcellular location is the mitochondrion inner membrane. The protein localises to the mitochondrion matrix. It is found in the mitochondrion nucleoid. The catalysed reaction is ATP + H2O = ADP + phosphate + H(+). Functionally, essential for mitochondrial network organization, mitochondrial metabolism and cell growth at organism and cellular level. May play an important role in mitochondrial protein synthesis. May also participate in mitochondrial DNA replication. May bind to mitochondrial DNA D-loops and contribute to nucleoid stability. Required for enhanced channeling of cholesterol for hormone-dependent steroidogenesis. Involved in mitochondrial-mediated antiviral innate immunity. Required to protect mitochondria from the PERK-mediated unfolded protein response: specifically inhibits the activity of EIF2AK3/PERK at mitochondria-endoplasmic reticulum contact sites, thereby providing a safe haven for mitochondrial protein translation during endoplasmic reticulum stress. Ability to inhibit EIF2AK3/PERK is independent of its ATPase activity. Also involved in the mitochondrial DNA damage response by promoting signaling between damaged genomes and the mitochondrial membrane, leading to activation of the integrated stress response (ISR). This is ATPase family AAA domain-containing protein 3A from Homo sapiens (Human).